The sequence spans 296 residues: Ceramide synthase LOH2 (296 aa).

6 helical membrane-spanning segments follow: residues 19-39 (VWHF…RLVL), 80-100 (LLYY…EPWA), 121-141 (LYYM…LAWE), 158-178 (IILL…IILA), 206-226 (FALF…FWII), and 254-274 (MLLM…AMIV). The TLC domain occupies 71 to 278 (VKCKESLWKL…ICAMIVRLLK (208 aa)). Phosphoserine is present on residues S289 and S291.

In terms of tissue distribution, expressed ubiquitously with highest levels in pollen.

It localises to the endoplasmic reticulum membrane. It carries out the reaction a sphingoid base + hexadecanoyl-CoA = an N-hexadecanoyl-sphingoid base + CoA + H(+). The catalysed reaction is sphinganine + hexadecanoyl-CoA = N-hexadecanoylsphinganine + CoA + H(+). It catalyses the reaction sphing-4-enine + hexadecanoyl-CoA = N-hexadecanoylsphing-4-enine + CoA + H(+). The enzyme catalyses sphinga-(4E,8E)-dienine + hexadecanoyl-CoA = N-hexadecanoylsphinga-(4E,8E)-dienine + CoA + H(+). It carries out the reaction sphinga-(4E,8Z)-dienine + hexadecanoyl-CoA = N-hexadecanoylsphinga-(4E,8Z)-dienine + CoA + H(+). It participates in sphingolipid metabolism. Inhibited by the mycotoxin fumonisin B(1), a sphingosine analog mycotoxins produced by pathogenic fungi. Activated by divalent cation such as magnesium Mg(2+), zinc Zn(2+), manganese Mn(2+) and calcium Ca(2+). Prevents cell division in root meristems and promotes salicylic acid (SA) production and hypersensitive response (HR). Catalyzes the biosynthesis of ceramide sphingolipids with C(16) fatty acids, structural membrane lipids involved in membrane trafficking (e.g. early endosomes) and cell polarity (e.g. polar auxin transport related proteins); accepts only C16:0 fatty acids, but with a wide range of d18 sphingoid bases, such as sphinganine (d18:0) and palmitoyl-CoA. Mediates resistance to sphinganine-analog mycotoxins (SAMs, e.g. fumonisin B(1)) by restoring the sphingolipid biosynthesis. Could salvage the transport of GPI-anchored proteins from the endoplasmic reticulum to the Golgi apparatus in ceramides-depleted cells after SAM exposure. Contributes to hypoxic conditions tolerance (e.g. submergences), especially in the dark, by promoting the formation of very-long-chain (VLC) ceramide species (22:1, 24:1 and 26:1) and of VLC unsaturated ceramides, which are modulating CTR1-mediated ethylene signaling leading to endoplasmic reticulum (ER)-to-nucleus translocation of EIN2 and EIN3. The protein is Ceramide synthase LOH2 of Arabidopsis thaliana (Mouse-ear cress).